The sequence spans 340 residues: UDP-3-O-acylglucosamine N-acyltransferase (340 aa).

The Proton acceptor role is filled by His238.

This sequence belongs to the transferase hexapeptide repeat family. LpxD subfamily. As to quaternary structure, homotrimer.

It carries out the reaction a UDP-3-O-[(3R)-3-hydroxyacyl]-alpha-D-glucosamine + a (3R)-hydroxyacyl-[ACP] = a UDP-2-N,3-O-bis[(3R)-3-hydroxyacyl]-alpha-D-glucosamine + holo-[ACP] + H(+). Its pathway is bacterial outer membrane biogenesis; LPS lipid A biosynthesis. In terms of biological role, catalyzes the N-acylation of UDP-3-O-acylglucosamine using 3-hydroxyacyl-ACP as the acyl donor. Is involved in the biosynthesis of lipid A, a phosphorylated glycolipid that anchors the lipopolysaccharide to the outer membrane of the cell. The sequence is that of UDP-3-O-acylglucosamine N-acyltransferase from Shewanella frigidimarina (strain NCIMB 400).